A 419-amino-acid polypeptide reads, in one-letter code: 20-hydroxy-prefusarin hydrolase FUS2 (419 aa).

Residue Ser-238 is part of the active site.

It belongs to the AB hydrolase superfamily. FUS2 hydrolase family.

It functions in the pathway mycotoxin biosynthesis. Functionally, 20-hydroxy-prefusarin hydrolase; part of the gene cluster that mediates the biosynthesis of the mycotoxin fusarin C. Within the cluster, FUS1, FUS2, FUS8 and FUS9 are sufficient for fusarin production. The roles of the other FUS members are yet undetermined. The fusarin C synthetase FUS1 is responsible for the condensation of one acetyl-coenzyme A (CoA) unit with six malonyl-CoA units and the amide linkage of the arising heptaketide and homoserine, subsequently releasing the first intermediate, prefusarin, as an alcohol with an open ring structure. The cytochrome P450 monooxygenase FUS8 participates in multiple oxidation processes at carbon C-20 and is able to use the FUS1 product as substrate, resulting in formation of 20-hydroxy-prefusarin. This reaction seems to be essential before the 2-pyrrolidone ring closure can be catalyzed by FUS2, generating 20-hydroxy-fusarin. FUS8 is able to further oxidizes carbon C-20 after ring closure, resulting in the formation of carboxy-fusarin C. As the last step, FUS9 methylates the hydroxyl group at C-21 to generate fusarin C. Fusarin C can then rearrange to epi-fusarin C, the (z)-isomers, and fusarin A and fusarin D. This chain is 20-hydroxy-prefusarin hydrolase FUS2, found in Gibberella moniliformis (strain M3125 / FGSC 7600) (Maize ear and stalk rot fungus).